A 367-amino-acid polypeptide reads, in one-letter code: GTP cyclohydrolase FolE2 (367 aa).

The protein belongs to the GTP cyclohydrolase IV family.

The catalysed reaction is GTP + H2O = 7,8-dihydroneopterin 3'-triphosphate + formate + H(+). It participates in cofactor biosynthesis; 7,8-dihydroneopterin triphosphate biosynthesis; 7,8-dihydroneopterin triphosphate from GTP: step 1/1. In terms of biological role, converts GTP to 7,8-dihydroneopterin triphosphate. This chain is GTP cyclohydrolase FolE2, found in Dinoroseobacter shibae (strain DSM 16493 / NCIMB 14021 / DFL 12).